The primary structure comprises 434 residues: Protein POLLENLESS 3 (434 aa).

Residues 13–47 (VYYTPPPARTSDHVAAMPMTERRRPPYSCSSSSER) form a disordered region. The Nuclear localization signal 1 signature appears at 34 to 37 (RRRP). TPR repeat units follow at residues 95-131 (DSAL…ESQD), 133-164 (IDNL…LEQG), 191-224 (ARIL…ERDK), and 241-274 (PEAK…AVEM). A coiled-coil region spans residues 142–166 (KKSGRIEEEAVLLEHKLQTLEQGMG). The tract at residues 309 to 329 (TANKNYSDVSSSPASVRPNSA) is disordered. Over residues 310 to 326 (ANKNYSDVSSSPASVRP) the composition is skewed to polar residues. Positions 377–380 (KRKK) match the Nuclear localization signal 2 motif. Residues 393–408 (VKDTADGPKSESKKSW) show a composition bias toward basic and acidic residues. Residues 393–434 (VKDTADGPKSESKKSWADIAEEEEAEEEEEERLQGELKTAEM) are disordered. A coiled-coil region spans residues 408–434 (WADIAEEEEAEEEEEERLQGELKTAEM). Positions 411-423 (IAEEEEAEEEEEE) are enriched in acidic residues. The segment covering 424–434 (RLQGELKTAEM) has biased composition (basic and acidic residues).

This sequence belongs to the MS5 protein family. Expressed at low levels mostly in floral organs during meiosis. Also barely detectable in leaves, stems and roots.

The protein resides in the nucleus. Its function is as follows. Essential for male fertility, especially for microspore and pollen grain production. Involved in the regulation of cell division after male meiosis I and II to facilitate exit from meiosis and transition to G1. The polypeptide is Protein POLLENLESS 3 (Arabidopsis thaliana (Mouse-ear cress)).